Reading from the N-terminus, the 379-residue chain is Probable pectin lyase A (379 aa).

The N-terminal stretch at 1–20 is a signal peptide; the sequence is MKYSTIFSAAAAVFAGSAAA. 2 cysteine pairs are disulfide-bonded: Cys83/Cys102 and Cys92/Cys226. An N-linked (GlcNAc...) asparagine glycan is attached at Asn129. Arg256 is an active-site residue. Cys322 and Cys330 are joined by a disulfide.

Belongs to the polysaccharide lyase 1 family.

It is found in the secreted. It carries out the reaction Eliminative cleavage of (1-&gt;4)-alpha-D-galacturonan methyl ester to give oligosaccharides with 4-deoxy-6-O-methyl-alpha-D-galact-4-enuronosyl groups at their non-reducing ends.. Functionally, pectinolytic enzymes consist of four classes of enzymes: pectin lyase, polygalacturonase, pectin methylesterase and rhamnogalacturonase. Among pectinolytic enzymes, pectin lyase is the most important in depolymerization of pectin, since it cleaves internal glycosidic bonds of highly methylated pectins. This is Probable pectin lyase A (pelA) from Aspergillus niger (strain ATCC MYA-4892 / CBS 513.88 / FGSC A1513).